Consider the following 253-residue polypeptide: MRATWKGSISFGLVNIPVKVYKATTQKEIQFHLLHSADGGRIRYRKVCEKCGKEVSDGEIVKGYEISKNEYVILTDEDFEKIPLKSTKSIEIRQFFDPAELGLIYYSSFYYISPDKGGEKAYYLLKKAMEETNSMGIGKMTMRGKENLVALRPYDGGIVLAQLHYIDEVRSPLELPGWGAVAEITEEELELAKKLILAMKKPLKLEEFRDEYKEALMQLIEAKLSGREIVVSEGVEEVKSLIDALKASLEAVK.

Positions 9 to 192 constitute a Ku domain; it reads ISFGLVNIPV…EITEEELELA (184 aa).

Belongs to the prokaryotic Ku family. Homodimer. Interacts with LigD.

Functionally, with LigD forms a non-homologous end joining (NHEJ) DNA repair enzyme, which repairs dsDNA breaks with reduced fidelity. Binds linear dsDNA with 5'- and 3'- overhangs but not closed circular dsDNA nor ssDNA. Recruits and stimulates the ligase activity of LigD. The sequence is that of Non-homologous end joining protein Ku from Archaeoglobus fulgidus (strain ATCC 49558 / DSM 4304 / JCM 9628 / NBRC 100126 / VC-16).